The chain runs to 292 residues: NAD kinase (292 aa).

Aspartate 73 acts as the Proton acceptor in catalysis. NAD(+) is bound by residues 73 to 74 (DG), 147 to 148 (NE), histidine 158, arginine 175, aspartate 177, 188 to 193 (TAYSLS), and glutamine 247.

It belongs to the NAD kinase family. The cofactor is a divalent metal cation.

The protein resides in the cytoplasm. It catalyses the reaction NAD(+) + ATP = ADP + NADP(+) + H(+). In terms of biological role, involved in the regulation of the intracellular balance of NAD and NADP, and is a key enzyme in the biosynthesis of NADP. Catalyzes specifically the phosphorylation on 2'-hydroxyl of the adenosine moiety of NAD to yield NADP. This Escherichia coli O157:H7 protein is NAD kinase.